Here is a 205-residue protein sequence, read N- to C-terminus: Macrophage immunometabolism regulator (205 aa).

The segment at 1-40 is disordered; sequence MEVDINGVNRTNNSVPSTAEGSSPSKPDPEKPRCSSTPCS. Polar residues predominate over residues 8–25; that stretch reads VNRTNNSVPSTAEGSSPS.

This sequence belongs to the UNC119-binding protein family. As to quaternary structure, interacts with unc119 family proteins; interaction preferentially takes place when unc119 proteins are unliganded with myristoylated proteins.

The protein resides in the cytoplasm. It is found in the cell projection. It localises to the cilium. May play a role in immune regulation through regulation of the macrophage function. May also play a role in trafficking of proteins via its interaction with unc119 family cargo adapters. May play a role in ciliary membrane localization. In Xenopus laevis (African clawed frog), this protein is Macrophage immunometabolism regulator (macir).